The chain runs to 690 residues: Calpain-9 (690 aa).

The disordered stretch occupies residues 1–24; that stretch reads MPYLYRAPGPQAHPVPKDARITHS. Residues 42-337 form the Calpain catalytic domain; sequence LFEDADFPAS…FDKVEICNLT (296 aa). Ca(2+)-binding residues include Leu81, Gly83, and Asp88. Cys97 is a catalytic residue. Residue Glu167 participates in Ca(2+) binding. Catalysis depends on residues His254 and Asn278. Ca(2+) is bound by residues Glu284, Asp291, Leu312, Asp314, and Glu316. The domain III stretch occupies residues 338–521; that stretch reads PDALEEDAIH…PPDQETEEEQ (184 aa). Residues 498-519 are disordered; sequence GNVDIDLPEPPKPTPPDQETEE. 3 consecutive EF-hand domains span residues 518 to 552, 561 to 589, and 591 to 626; these read EEEQ…VLQK, LSLI…FKVF, and DKLK…AGFQ. The segment at 522 to 690 is domain IV; that stretch reads RFRALFEQVA…NEFIHLTMNI (169 aa). Residues Asp574, Ser576, Asn578, Lys580, Glu585, Asp604, Asp606, Ser608, Thr610, and Glu615 each coordinate Ca(2+).

It belongs to the peptidase C2 family. In terms of tissue distribution, expressed predominantly in stomach.

In terms of biological role, calcium-regulated non-lysosomal thiol-protease. The protein is Calpain-9 (CAPN9) of Homo sapiens (Human).